The sequence spans 120 residues: Natriuretic peptide (120 aa).

The signal sequence occupies residues M1–G25. The propeptide occupies K26–E70. Cysteines 81 and 97 form a disulfide. Positions I110–E120 are excised as a propeptide.

It belongs to the natriuretic peptide family. As to expression, expressed by the venom gland.

The protein localises to the secreted. In terms of biological role, natriuretic peptide that dose-dependently induces the rapid relaxation of rat aortic strips phenylephrine-precontracted. Acts by stimulating cGMP production in a dose-dependent manner (by probably activating NPR1 and/or NPR2). May also show potent hypotensive effects. This Micrurus altirostris (Uruguayan coral snake) protein is Natriuretic peptide.